Here is a 245-residue protein sequence, read N- to C-terminus: Gas vesicle protein F (245 aa).

Belongs to the gas vesicle GvpF/GvpL family. Binds GvpA.

Its subcellular location is the gas vesicle. Functionally, a minor component of the gas vesicle, may be involved in preventing GvpA aggregation during gas vesicle nucleation. Gas vesicles (GV) are hollow, gas filled proteinaceous nanostructures. During planktonic growth they allow positioning of the organism at a favorable depth for light or nutrient acquisition. In Dolichospermum flosaquae (Anabaena flos-aquae), this protein is Gas vesicle protein F.